The sequence spans 121 residues: Ribonuclease P protein component (121 aa).

This sequence belongs to the RnpA family. Consists of a catalytic RNA component (M1 or rnpB) and a protein subunit.

It catalyses the reaction Endonucleolytic cleavage of RNA, removing 5'-extranucleotides from tRNA precursor.. Its function is as follows. RNaseP catalyzes the removal of the 5'-leader sequence from pre-tRNA to produce the mature 5'-terminus. It can also cleave other RNA substrates such as 4.5S RNA. The protein component plays an auxiliary but essential role in vivo by binding to the 5'-leader sequence and broadening the substrate specificity of the ribozyme. The polypeptide is Ribonuclease P protein component (Erythrobacter litoralis (strain HTCC2594)).